We begin with the raw amino-acid sequence, 524 residues long: 2-isopropylmalate synthase (524 aa).

Positions 15–277 (VVIFDTTMRD…ETKIDTTHIT (263 aa)) constitute a Pyruvate carboxyltransferase domain. Residues aspartate 24, histidine 212, histidine 214, and asparagine 248 each coordinate Mn(2+). The regulatory domain stretch occupies residues 401–524 (RVQRLRVVAG…RPEAAIASGF (124 aa)).

This sequence belongs to the alpha-IPM synthase/homocitrate synthase family. LeuA type 1 subfamily. Homodimer. It depends on Mn(2+) as a cofactor.

The protein resides in the cytoplasm. The catalysed reaction is 3-methyl-2-oxobutanoate + acetyl-CoA + H2O = (2S)-2-isopropylmalate + CoA + H(+). It participates in amino-acid biosynthesis; L-leucine biosynthesis; L-leucine from 3-methyl-2-oxobutanoate: step 1/4. Catalyzes the condensation of the acetyl group of acetyl-CoA with 3-methyl-2-oxobutanoate (2-ketoisovalerate) to form 3-carboxy-3-hydroxy-4-methylpentanoate (2-isopropylmalate). The polypeptide is 2-isopropylmalate synthase (Caulobacter sp. (strain K31)).